The following is a 409-amino-acid chain: Sex-determination protein fem-3 (409 aa).

Component of a complex containing fem-1, fem-2 and fem-3. Interacts with fem-1 and fem-2 (via N-terminus). Part of a E3 ubiquitin-protein ligase complex, at least composed of cul-2, elc-1, tra-1, fem-1, fem-2 and fem-3; mediates the ubiquitination and subsequent proteasomal degradation of tra-1. Interacts with sel-10. Interacts with tra-2.

In terms of biological role, required for male development. In XO (male) animals, fem-3 directs male differentiation in all tissues. In XX (hermaphrodite animals), it specifies the first 80 or so germ cells to be sperm. Negatively regulates male development when bound to tra-2. The sequence is that of Sex-determination protein fem-3 from Caenorhabditis briggsae.